Here is a 239-residue protein sequence, read N- to C-terminus: Fatty acid metabolism regulator protein (239 aa).

An HTH gntR-type domain is found at 6-74 (QSPAGFAEEY…HGKPTKINNF (69 aa)). A DNA-binding region (H-T-H motif) is located at residues 34–53 (ERELSELIGVTRTTLREVLQ).

As to quaternary structure, homodimer.

The protein localises to the cytoplasm. Functionally, multifunctional regulator of fatty acid metabolism. In Pectobacterium carotovorum subsp. carotovorum (strain PC1), this protein is Fatty acid metabolism regulator protein.